We begin with the raw amino-acid sequence, 510 residues long: Lysine--tRNA ligase (510 aa).

Mg(2+) is bound by residues E420 and E427.

It belongs to the class-II aminoacyl-tRNA synthetase family. In terms of assembly, homodimer. Mg(2+) serves as cofactor.

It is found in the cytoplasm. The enzyme catalyses tRNA(Lys) + L-lysine + ATP = L-lysyl-tRNA(Lys) + AMP + diphosphate. The polypeptide is Lysine--tRNA ligase (Clostridium novyi (strain NT)).